A 398-amino-acid chain; its full sequence is Elongation factor Tu (398 aa).

In terms of domain architecture, tr-type G spans 10–208 (KPHVNVGTIG…ALDSHIPEPT (199 aa)). A G1 region spans residues 19-26 (GHIDHGKT). 19–26 (GHIDHGKT) serves as a coordination point for GTP. Residue Thr-26 coordinates Mg(2+). The G2 stretch occupies residues 60–64 (TKTVT). The tract at residues 83-86 (DCPG) is G3. Residues 83 to 87 (DCPGH) and 138 to 141 (NKCD) each bind GTP. The tract at residues 138–141 (NKCD) is G4. Residues 176-178 (SSL) are G5.

It belongs to the TRAFAC class translation factor GTPase superfamily. Classic translation factor GTPase family. EF-Tu/EF-1A subfamily. In terms of assembly, monomer.

The protein localises to the cytoplasm. It catalyses the reaction GTP + H2O = GDP + phosphate + H(+). GTP hydrolase that promotes the GTP-dependent binding of aminoacyl-tRNA to the A-site of ribosomes during protein biosynthesis. This is Elongation factor Tu from Rhodopirellula baltica (strain DSM 10527 / NCIMB 13988 / SH1).